Consider the following 275-residue polypeptide: 2,3,4,5-tetrahydropyridine-2,6-dicarboxylate N-succinyltransferase (275 aa).

2 residues coordinate substrate: Arg-104 and Asp-141.

This sequence belongs to the transferase hexapeptide repeat family. Homotrimer.

It localises to the cytoplasm. The catalysed reaction is (S)-2,3,4,5-tetrahydrodipicolinate + succinyl-CoA + H2O = (S)-2-succinylamino-6-oxoheptanedioate + CoA. The protein operates within amino-acid biosynthesis; L-lysine biosynthesis via DAP pathway; LL-2,6-diaminopimelate from (S)-tetrahydrodipicolinate (succinylase route): step 1/3. The protein is 2,3,4,5-tetrahydropyridine-2,6-dicarboxylate N-succinyltransferase of Tolumonas auensis (strain DSM 9187 / NBRC 110442 / TA 4).